Reading from the N-terminus, the 315-residue chain is MYIPTYEDMLAAHERIKPHIRRTPIRTSDYLNELTGAQLFFKCENFQEPGAFKVRGATNAVFGLDDAQAAKGVATHSSGNHASCLSYAAMLRGIPCNVVMPRTAPQAKKDTVRRYGGVITECEPSTSSREETFAKVQAETGGDFVHPYNDPRVIAGQGTCAKELVEQVDGLDAVVAPIGGGGMISGTCLTLSTLAPETRVIAAEPEQADDAYRSFKAGYIIADDAPKTVADGLLVPLKDLTWHFVKNHVSEIYTASDAEIVDAMKLIWKHLRIVMEPSSAVPLATILKNPEAFAGKRVGVIVTGGNVDLDKLPWN.

Lys53 is modified (N6-(pyridoxal phosphate)lysine). Pyridoxal 5'-phosphate contacts are provided by residues Asn80, 179–183, and Thr303; that span reads GGGGM.

Pyridoxal 5'-phosphate is required as a cofactor.

It carries out the reaction (3S)-3-hydroxy-D-aspartate = iminosuccinate + H2O. In terms of biological role, catalyzes the dehydration of (2R,3S)-beta-hydroxyaspartate ((3S)-3-hydroxy-D-aspartate) into iminosuccinate. Is essential for the growth of P.denitrificans in the presence of glycolate and glyoxylate since it functions in glyoxylate assimilation via the beta-hydroxyaspartate cycle (BHAC). The sequence is that of beta-hydroxyaspartate dehydratase from Paracoccus denitrificans (strain Pd 1222).